The primary structure comprises 373 residues: LIM domain-binding protein 1 (373 aa).

Disordered stretches follow at residues 248 to 297 (PPAE…LSSQ) and 329 to 373 (DAAN…QASQ). Over residues 266–282 (SGGSTMSSGGGNTNNSN) the composition is skewed to low complexity. Polar residues predominate over residues 288 to 297 (PASTFALSSQ). The 40-residue stretch at 298-337 (DVMVVGEPTLMGGEFGDEDERLITRLENTQFDAANGIDDE) folds into the LIM interaction domain (LID) domain.

The protein belongs to the LDB family. As to quaternary structure, forms homodimers and heterodimers. Interacts with and activates lhx1/lim1. The stoichiometry of lhx1/lim1 and ldb1 is important for their function and an excess of ldb1 can inhibit lhx1/lim1 function. When bound to lhx1/lim1, escapes degradation by rnf12. Interacts with the N-terminal region of rnf12. In terms of processing, undergoes rnf12-mediated ubiquitin-proteasome-dependent degradation.

It is found in the nucleus. Binds to the LIM domain of a wide variety of LIM domain-containing transcription factors. Acts as a coactivator together with otx2 to stimulate lhx1/lim1-mediated activation of the gsc promoter in the Spemann organizer. Acts synergistically with lhx1/lim1 and ssbp in axis formation. The polypeptide is LIM domain-binding protein 1 (Xenopus tropicalis (Western clawed frog)).